Reading from the N-terminus, the 152-residue chain is Deoxyuridine 5'-triphosphate nucleotidohydrolase (152 aa).

Residues 71–73, asparagine 84, 88–90, and methionine 98 each bind substrate; these read RSG and LID.

This sequence belongs to the dUTPase family. The cofactor is Mg(2+).

It catalyses the reaction dUTP + H2O = dUMP + diphosphate + H(+). Its pathway is pyrimidine metabolism; dUMP biosynthesis; dUMP from dCTP (dUTP route): step 2/2. Functionally, this enzyme is involved in nucleotide metabolism: it produces dUMP, the immediate precursor of thymidine nucleotides and it decreases the intracellular concentration of dUTP so that uracil cannot be incorporated into DNA. This is Deoxyuridine 5'-triphosphate nucleotidohydrolase from Shewanella woodyi (strain ATCC 51908 / MS32).